Consider the following 147-residue polypeptide: NADH-quinone oxidoreductase subunit A (147 aa).

Helical transmembrane passes span 11 to 31 (IWPLVAYFFLVVMLVVGVMAL), 68 to 88 (LIAVFFVIFDVEAVFLFAWAV), and 93 to 113 (LGWPGYIEAIIFISILGAALA).

The protein belongs to the complex I subunit 3 family. In terms of assembly, NDH-1 is composed of 14 different subunits. Subunits NuoA, H, J, K, L, M, N constitute the membrane sector of the complex.

It is found in the cell inner membrane. The enzyme catalyses a quinone + NADH + 5 H(+)(in) = a quinol + NAD(+) + 4 H(+)(out). Functionally, NDH-1 shuttles electrons from NADH, via FMN and iron-sulfur (Fe-S) centers, to quinones in the respiratory chain. The immediate electron acceptor for the enzyme in this species is believed to be ubiquinone. Couples the redox reaction to proton translocation (for every two electrons transferred, four hydrogen ions are translocated across the cytoplasmic membrane), and thus conserves the redox energy in a proton gradient. The polypeptide is NADH-quinone oxidoreductase subunit A (Nitrosospira multiformis (strain ATCC 25196 / NCIMB 11849 / C 71)).